Here is a 163-residue protein sequence, read N- to C-terminus: Tail tube protein gp19 (163 aa).

The protein belongs to the T4-like viruses Gp19 protein family.

It localises to the virion. Structural component of the bacteriophage tail which consists of a contractile sheath, a tube and a baseplate. The central cylindrical segment of the tail consists of a rigid tube, composed of multiple copies of the tail tube protein. During infection, contraction of the sheath drives the central tube through the host outer membrane, creating a channel for DNA ejection from the capsid into the host cell. The sequence is that of Tail tube protein gp19 (19) from Escherichia coli (Bacteriophage T6).